Consider the following 602-residue polypeptide: Bifunctional lycopene cyclase/phytoene synthase (602 aa).

The interval 1–241 (MYDYAFVHLK…IVGGMAAFDQ (241 aa)) is lycopene beta-cyclase. 7 consecutive transmembrane segments (helical) span residues 6–26 (FVHL…AYPI), 30–50 (IHLI…LPWD), 76–96 (FEEL…YILF), 118–138 (VVKV…WNAA), 146–166 (YLGL…TLAG), 168–188 (FILS…TFYL), and 230–250 (MLIV…YAFP). The segment at 248–602 (AFPTLFPKVN…STLLRALYEQ (355 aa)) is phytoene synthase.

This sequence in the N-terminal section; belongs to the lycopene beta-cyclase family. In the C-terminal section; belongs to the phytoene/squalene synthase family.

The protein localises to the membrane. The enzyme catalyses all-trans-lycopene = gamma-carotene. It catalyses the reaction gamma-carotene = all-trans-beta-carotene. It carries out the reaction 2 (2E,6E,10E)-geranylgeranyl diphosphate = 15-cis-phytoene + 2 diphosphate. It functions in the pathway carotenoid biosynthesis; beta-carotene biosynthesis. It participates in carotenoid biosynthesis; phytoene biosynthesis; all-trans-phytoene from geranylgeranyl diphosphate: step 1/1. Functionally, bifunctional enzyme that catalyzes the reactions from geranylgeranyl diphosphate to phytoene (phytoene synthase) and from lycopene to beta-carotene via the intermediate gamma-carotene and from 3,4-didehydrolycopene to torulene (lycopene cyclase). Torulene is further processed to the acidic carotenoid neurosporaxanthin. The cyclase preferentially catalyzes single cyclizations at only one end of the substrate to produce monocyclic carotenoids. Neurosporaxanthin is synthesized from geranyl-geranyl pyrophosphate (GGPP) through several enzymatic activities. Phytoene synthase activity performed by the bifunctional enzyme al-2 first produces phytoene from geranyl-geranyl pyrophosphate (GGPP). The phytoene dehydrogenase al-1 then introduces 5 desaturations to lead to 3,4-didehydrolycopene via the intermediates phytofluene, zeta-carotene, neurosporene and lycopene. Al-2 cyclase activity then converts 3,4-didehydrolycopene into torulene. Al-2 can also convet lycopene into gamma-carotene which in turn is converted to beta-carotene by an additional al-2 cyclization reaction. Torulene is the substrate of the dioxidase cao-2 that breaks the molecule, removing five carbon atoms to yield beta-apo-4'-carotenal, whereas the aldehyde dehydrogenase ylo-1 mediates the last step by converting beta-apo-4'-carotenal into neurosporaxanthin. This Neurospora crassa (strain ATCC 24698 / 74-OR23-1A / CBS 708.71 / DSM 1257 / FGSC 987) protein is Bifunctional lycopene cyclase/phytoene synthase.